A 349-amino-acid polypeptide reads, in one-letter code: uncharacterized protein (349 aa).

Residues 17–37 (VIAIVSTGLVFAMTLVLTGLV) form a helical membrane-spanning segment. The interval 111-131 (FGAPEHGPGMPRVSDGRAPST) is disordered. 3 helical membrane passes run 230–250 (AITVVAVLLWIVAALIVGSVV), 284–304 (VVALLAAVVGGILSLLLAPLF), and 308–328 (VVVPLSAFVALPAIATVIGLL).

The protein belongs to the ABC-4 integral membrane protein family.

It localises to the cell membrane. This is an uncharacterized protein from Mycobacterium bovis (strain ATCC BAA-935 / AF2122/97).